A 516-amino-acid chain; its full sequence is MSMVQTVDNVALLPAYLAAGTAVLVLLADLLVARARVTISVAALGALATAAGAVLVGGGGERRTFCVGADCSYVFGGRAALVAVLVALLTLGVLGLSGPLLRAGATPVGEYCFLLAASMTGGVALGAAGDLITLIVALETLTLPLYVLVGLRRGSLASIEAAVTFFVVSVVATTLTLLGAALLYATTGALHLGRLGALFAERPELLDIPLTTVAVALVVVGLTVKVAAVPFHAWAPTTYDGAPLPVAAYLSTVSKLGGVVALLAVVQHALPAQITGLVLALLAVLTMTVGNLVALRQRRTVRLLAWSSVAQAGYILAPLGALALAAGRTGDARAAAYAAAVAYTVFFVVLELAAFAAVVALRPAGADGGTLDELRGAARRRPWAAVGLALALVGLAGLPPGLAGLFAKVTVVRSLLDGGAAGLALVVAVNAVLGLAYYLRVVAALWSTDRPAVIPTDPTAVPTDPAAAATGPAVGSIDPSVALVRAKPVAVVLAAATVVALVVGFAPQLVLDLAAR.

The next 14 membrane-spanning stretches (helical) occupy residues 12 to 32, 37 to 57, 81 to 101, 108 to 128, 131 to 151, 163 to 183, 213 to 233, 246 to 266, 274 to 294, 303 to 323, 341 to 361, 386 to 406, 419 to 439, and 491 to 511; these read LLPAYLAAGTAVLVLLADLLV, VTISVAALGALATAAGAVLVG, LVAVLVALLTLGVLGLSGPLL, VGEYCFLLAASMTGGVALGAA, LITLIVALETLTLPLYVLVGL, VTFFVVSVVATTLTLLGAALL, VAVALVVVGLTVKVAAVPFHA, VAAYLSTVSKLGGVVALLAVV, ITGLVLALLAVLTMTVGNLVA, LLAWSSVAQAGYILAPLGALA, VAYTVFFVVLELAAFAAVVAL, VGLALALVGLAGLPPGLAGLF, GAAGLALVVAVNAVLGLAYYL, and VVLAAATVVALVVGFAPQLVL.

The protein belongs to the complex I subunit 2 family. In terms of assembly, NDH-1 is composed of 14 different subunits. Subunits NuoA, H, J, K, L, M, N constitute the membrane sector of the complex.

It localises to the cell membrane. The catalysed reaction is a quinone + NADH + 5 H(+)(in) = a quinol + NAD(+) + 4 H(+)(out). In terms of biological role, NDH-1 shuttles electrons from NADH, via FMN and iron-sulfur (Fe-S) centers, to quinones in the respiratory chain. The immediate electron acceptor for the enzyme in this species is believed to be a menaquinone. Couples the redox reaction to proton translocation (for every two electrons transferred, four hydrogen ions are translocated across the cytoplasmic membrane), and thus conserves the redox energy in a proton gradient. This is NADH-quinone oxidoreductase subunit N from Salinispora tropica (strain ATCC BAA-916 / DSM 44818 / JCM 13857 / NBRC 105044 / CNB-440).